Here is a 296-residue protein sequence, read N- to C-terminus: 4-diphosphocytidyl-2-C-methyl-D-erythritol kinase (296 aa).

Lys-12 is an active-site residue. 94–104 (PAQAGMGGGSS) contributes to the ATP binding site. The active site involves Asp-136.

The protein belongs to the GHMP kinase family. IspE subfamily.

It carries out the reaction 4-CDP-2-C-methyl-D-erythritol + ATP = 4-CDP-2-C-methyl-D-erythritol 2-phosphate + ADP + H(+). Its pathway is isoprenoid biosynthesis; isopentenyl diphosphate biosynthesis via DXP pathway; isopentenyl diphosphate from 1-deoxy-D-xylulose 5-phosphate: step 3/6. Its function is as follows. Catalyzes the phosphorylation of the position 2 hydroxy group of 4-diphosphocytidyl-2C-methyl-D-erythritol. The sequence is that of 4-diphosphocytidyl-2-C-methyl-D-erythritol kinase from Variovorax paradoxus (strain S110).